The chain runs to 503 residues: Probable folate-biopterin transporter 6 (503 aa).

Transmembrane regions (helical) follow at residues 56-76, 101-121, 128-148, 153-173, 194-214, 221-241, 281-301, 314-334, 344-364, 369-389, 404-424, and 450-470; these read SFVL…GSIF, LYYI…VFPI, PYFV…VVLG, ALAL…DVVI, LCMV…GVFV, GALG…FFIY, LYMF…FYWY, FVGI…LIYH, NILF…LVFI, LTLG…TKMI, LCPL…DSFG, and WLVI…VFLV.

The protein belongs to the major facilitator superfamily. Folate-biopterin transporter (TC 2.A.71) family.

The protein resides in the membrane. In terms of biological role, could mediate folate transport. This chain is Probable folate-biopterin transporter 6, found in Arabidopsis thaliana (Mouse-ear cress).